Reading from the N-terminus, the 723-residue chain is Probable alpha-fucosidase A (723 aa).

The first 15 residues, 1 to 15 (MRSLVLLGMSSLATA), serve as a signal peptide directing secretion. N-linked (GlcNAc...) asparagine glycans are attached at residues Asn77, Asn98, Asn117, Asn171, Asn194, Asn243, Asn334, Asn558, Asn566, and Asn595.

Belongs to the glycosyl hydrolase 95 family.

The protein resides in the secreted. The catalysed reaction is an alpha-L-fucoside + H2O = L-fucose + an alcohol. Functionally, alpha-fucosidase involved in degradation of fucosylated xyloglucans. Hydrolyzes alpha-1,2-linked fucose. The sequence is that of Probable alpha-fucosidase A (afcA) from Aspergillus oryzae (strain ATCC 42149 / RIB 40) (Yellow koji mold).